A 584-amino-acid polypeptide reads, in one-letter code: Probable lysosomal cobalamin transporter (584 aa).

10 helical membrane-spanning segments follow: residues 8-28 (LIWIVYAIVVGILSIVASTFV), 46-66 (IFTLTALLATVLLLPVDVALV), 93-113 (TVVYYFLYSLDAVLCLLIVPF), 144-164 (TLVFILLTIILFLVGFFVPVA), 189-209 (ALTFALGLLIVMGIIVYVIYS), 313-333 (LLGGLLLLAISVMIWISMLLT), 350-370 (ILGKINIINPVNWVLVEAASV), 376-396 (VIFIVLVLHLFTSSVVGIATI), 421-441 (ATVMLTLITLALNYSISMIVV), and 509-529 (GIVDFWAQFVFLGFSLIVLLI).

It belongs to the LIMR family. LMBRD1 subfamily.

The protein localises to the lysosome membrane. Probable lysosomal cobalamin transporter. Required to export cobalamin from lysosomes allowing its conversion to cofactors. The polypeptide is Probable lysosomal cobalamin transporter (Coccidioides immitis (strain RS) (Valley fever fungus)).